The chain runs to 75 residues: Small ribosomal subunit protein bS18 (75 aa).

This sequence belongs to the bacterial ribosomal protein bS18 family. Part of the 30S ribosomal subunit. Forms a tight heterodimer with protein bS6.

Binds as a heterodimer with protein bS6 to the central domain of the 16S rRNA, where it helps stabilize the platform of the 30S subunit. The sequence is that of Small ribosomal subunit protein bS18 from Shewanella denitrificans (strain OS217 / ATCC BAA-1090 / DSM 15013).